We begin with the raw amino-acid sequence, 325 residues long: E3 ubiquitin-protein ligase SIAH2 (325 aa).

Over residues 1-15 (MSRPSSTGPSANKPC) the composition is skewed to polar residues. Positions 1 to 43 (MSRPSSTGPSANKPCSKQPPPPQTPHAPSPAAPPAAATISAAG) are disordered. At S6 the chain carries Phosphoserine. S16 is subject to Phosphoserine; by DYRK2. A compositionally biased stretch (pro residues) spans 17–33 (KQPPPPQTPHAPSPAAP). The residue at position 24 (T24) is a Phosphothreonine; by MAPK14. Residue S29 is modified to Phosphoserine; by DYRK2 and MAPK14. The span at 34–43 (PAAATISAAG) shows a compositional bias: low complexity. S69 carries the post-translational modification Phosphoserine; by DYRK2. An RING-type zinc finger spans residues 81-116 (CPVCFDYVLPPILQCQAGHLVCNQCRQKLSCCPTCR). The residue at position 120 (T120) is a Phosphothreonine; by DYRK2. The SBD stretch occupies residues 131–323 (VASAVLFPCK…LGINVTISTC (193 aa)). The SIAH-type zinc-finger motif lies at 134 to 194 (AVLFPCKYAT…VMSHLMHAHK (61 aa)). Zn(2+) is bound by residues C139, C146, H158, C162, C169, C176, H188, and H193.

Belongs to the SINA (Seven in absentia) family. Homodimer. Interacts with UBE2E2. Interacts with VAV1, without mediating its ubiquitin-mediated degradation. Interacts with CACYBP/SIP. Probable component of some large E3 complex possibly composed of UBE2D1, SIAH2, CACYBP/SIP, SKP1, APC and TBL1X. Interacts with UBE2I. Interacts with PEG10, which may inhibit its activity. Interacts with EGLN2 and SNCAIP. Interacts with DYRK2. Interacts with PEG3. Interacts with NR1D1 and NR1D2. Interacts with DCC. Interacts with AXIN1. Phosphorylated at Ser-29 by DYRK2; this increases the ubiquitin ligase activity and promotes degradation of EGLN3. Phosphorylated at Thr-24 and Ser-29 by MAPK14, which mediates the degradation by the proteasome of EGLN3. As to expression, widely expressed at low level in embryos and adults. Expressed in a specific population of germ cells within both the mouse ovary and testis. Absent in primordial oocytes but expressed in all growing oocytes, coincident with their recruitment from the pool of quiescent cells. Its level of expression increases as the oocytes mature. Expressed in Graafian follicles and in fertilized zygotes up until the two cell stage, a time of extensive maternal transcript degradation and zygotic gene activation. Expressed in the testis from postmeiotic spermatids.

Its subcellular location is the cytoplasm. It is found in the nucleus. The catalysed reaction is S-ubiquitinyl-[E2 ubiquitin-conjugating enzyme]-L-cysteine + [acceptor protein]-L-lysine = [E2 ubiquitin-conjugating enzyme]-L-cysteine + N(6)-ubiquitinyl-[acceptor protein]-L-lysine.. It participates in protein modification; protein ubiquitination. In terms of biological role, E3 ubiquitin-protein ligase that mediates ubiquitination and subsequent proteasomal degradation of target proteins. E3 ubiquitin ligases accept ubiquitin from an E2 ubiquitin-conjugating enzyme in the form of a thioester and then directly transfers the ubiquitin to targeted substrates. Mediates E3 ubiquitin ligase activity either through direct binding to substrates or by functioning as the essential RING domain subunit of larger E3 complexes. Mediates ubiquitination and proteasomal degradation of DYRK2 in response to hypoxia. Promotes monoubiquitination of SNCA. Triggers the ubiquitin-mediated degradation of many substrates, including proteins involved in transcription regulation (GPS2, POU2AF1, PML, NCOR1), a cell surface receptor (DCC), an antiapoptotic protein (BAG1), and a protein involved in synaptic vesicle function in neurons (SYP). It is thereby involved in apoptosis, tumor suppression, cell cycle, transcription and signaling processes. Has some overlapping function with SIAH1. Triggers the ubiquitin-mediated degradation of TRAF2, whereas SIAH1 does not. Regulates cellular clock function via ubiquitination of the circadian transcriptional repressors NR1D1 and NR1D2 leading to their proteasomal degradation. Plays an important role in mediating the rhythmic degradation/clearance of NR1D1 and NR1D2 contributing to their circadian profile of protein abundance. Mediates ubiquitination and degradation of EGLN2 and EGLN3 in response to the unfolded protein response (UPR), leading to their degradation and subsequent stabilization of ATF4. Also part of the Wnt signaling pathway in which it mediates the Wnt-induced ubiquitin-mediated proteasomal degradation of AXIN1. The protein is E3 ubiquitin-protein ligase SIAH2 (Siah2) of Mus musculus (Mouse).